The following is a 239-amino-acid chain: Ribosomal RNA large subunit methyltransferase E (239 aa).

A disordered region spans residues 1-20 (MTKAPIAGNRTGRKLGQRVK). Basic residues predominate over residues 11 to 20 (TGRKLGQRVK). S-adenosyl-L-methionine contacts are provided by Gly81, Trp83, Asp104, Asp120, and Asp144. The active-site Proton acceptor is Lys184.

This sequence belongs to the class I-like SAM-binding methyltransferase superfamily. RNA methyltransferase RlmE family.

It localises to the cytoplasm. It catalyses the reaction uridine(2552) in 23S rRNA + S-adenosyl-L-methionine = 2'-O-methyluridine(2552) in 23S rRNA + S-adenosyl-L-homocysteine + H(+). Its function is as follows. Specifically methylates the uridine in position 2552 of 23S rRNA at the 2'-O position of the ribose in the fully assembled 50S ribosomal subunit. The sequence is that of Ribosomal RNA large subunit methyltransferase E from Rhizobium etli (strain ATCC 51251 / DSM 11541 / JCM 21823 / NBRC 15573 / CFN 42).